Here is a 108-residue protein sequence, read N- to C-terminus: Phosphoribosyl-ATP pyrophosphatase (108 aa).

Belongs to the PRA-PH family.

Its subcellular location is the cytoplasm. It carries out the reaction 1-(5-phospho-beta-D-ribosyl)-ATP + H2O = 1-(5-phospho-beta-D-ribosyl)-5'-AMP + diphosphate + H(+). It functions in the pathway amino-acid biosynthesis; L-histidine biosynthesis; L-histidine from 5-phospho-alpha-D-ribose 1-diphosphate: step 2/9. This Geobacter sulfurreducens (strain ATCC 51573 / DSM 12127 / PCA) protein is Phosphoribosyl-ATP pyrophosphatase.